A 180-amino-acid chain; its full sequence is UPF0227 protein Spro_1925 (180 aa).

This sequence belongs to the UPF0227 family.

This is UPF0227 protein Spro_1925 from Serratia proteamaculans (strain 568).